The following is a 506-amino-acid chain: MSLTETTATFIYNYWYIIFHLYFYTTSKIIKYHHTTYLMIKFKASPPLNYINKGFFGIQATFTELKHLICHTSIDYAIDQFNNVPFPHVHTFVTKVLGNELIMTKDPENIKVLLRFPVFDKFDYGTRSSAVQPSLGMGIFTLEGENWKATRSVLRNMFDRKSIDKVHDFEPHFKTLQKRIDGKVGYFDIQQEFLKLGLELSIEFIFGQVVSEDVPHYDDFTQAWDRCQDYMMLRLLLGDFYWMANDWRYKQSNQIVQAFCDYLVQKSLENTCNDKFVFVHQLAKHTTNKTFIRDQALSLIMASRDTTAELMAFTILELSRKSHHLGKLREEIDANFGLESPDLLTFDSLRKFKYVQAILNETLRMYPGVPRNMKTAKCTTTLPKGGGPDGQDPILVKKGQSVGFISIATHLDPVLNFGSDAHVFRPDRWFDSSMKNLGCKYLPFNAGPRTCLGQQYTLIEASYLLVRLAQTYETVESHPDSVYPPRKKALINMCAADGVDVKFHRL.

Heme is bound at residue C451.

This sequence belongs to the cytochrome P450 family. The cofactor is heme.

In terms of biological role, together with an NADPH cytochrome P450 the enzyme system catalyzes the terminal hydroxylation as the first step in the assimilation of alkanes and fatty acids. The polypeptide is Cytochrome P450 52B1 (CYP52B1) (Candida tropicalis (Yeast)).